A 483-amino-acid chain; its full sequence is ATP synthase subunit beta (483 aa).

162-169 is a binding site for ATP; it reads GGAGVGKT.

The protein belongs to the ATPase alpha/beta chains family. In terms of assembly, F-type ATPases have 2 components, CF(1) - the catalytic core - and CF(0) - the membrane proton channel. CF(1) has five subunits: alpha(3), beta(3), gamma(1), delta(1), epsilon(1). CF(0) has four main subunits: a(1), b(1), b'(1) and c(9-12).

It localises to the cellular thylakoid membrane. The catalysed reaction is ATP + H2O + 4 H(+)(in) = ADP + phosphate + 5 H(+)(out). Functionally, produces ATP from ADP in the presence of a proton gradient across the membrane. The catalytic sites are hosted primarily by the beta subunits. The chain is ATP synthase subunit beta from Synechocystis sp. (strain ATCC 27184 / PCC 6803 / Kazusa).